A 227-amino-acid polypeptide reads, in one-letter code: ATP-dependent dethiobiotin synthetase BioD (227 aa).

12-17 (DVGKTV) contributes to the ATP binding site. Threonine 16 is a binding site for Mg(2+). The active site involves lysine 37. Residue threonine 41 participates in substrate binding. ATP is bound by residues aspartate 50, 110-113 (EGAG), 171-172 (GS), and 201-203 (PAG). Residues aspartate 50 and glutamate 110 each coordinate Mg(2+).

This sequence belongs to the dethiobiotin synthetase family. In terms of assembly, homodimer. The cofactor is Mg(2+).

The protein localises to the cytoplasm. The enzyme catalyses (7R,8S)-7,8-diammoniononanoate + CO2 + ATP = (4R,5S)-dethiobiotin + ADP + phosphate + 3 H(+). The protein operates within cofactor biosynthesis; biotin biosynthesis; biotin from 7,8-diaminononanoate: step 1/2. Its function is as follows. Catalyzes a mechanistically unusual reaction, the ATP-dependent insertion of CO2 between the N7 and N8 nitrogen atoms of 7,8-diaminopelargonic acid (DAPA, also called 7,8-diammoniononanoate) to form a ureido ring. The polypeptide is ATP-dependent dethiobiotin synthetase BioD (Rhodococcus erythropolis (strain PR4 / NBRC 100887)).